The following is a 403-amino-acid chain: Phospholipase A1-II 2 (403 aa).

Ser-218 functions as the Acyl-ester intermediate in the catalytic mechanism. Catalysis depends on charge relay system residues Ser-218, Asp-286, and His-323. The disordered stretch occupies residues 381 to 403; the sequence is GPDGRWVLQDHEPDDDDDDDDDD. Positions 392–403 are enriched in acidic residues; the sequence is EPDDDDDDDDDD.

It belongs to the AB hydrolase superfamily. Lipase family.

It localises to the cytoplasm. In terms of biological role, acylhydrolase that catalyzes the hydrolysis of phospholipids at the sn-1 position. The protein is Phospholipase A1-II 2 of Oryza sativa subsp. indica (Rice).